The primary structure comprises 493 residues: Galactose-1-phosphate uridylyltransferase 2 (493 aa).

This sequence belongs to the galactose-1-phosphate uridylyltransferase type 2 family.

It localises to the cytoplasm. The catalysed reaction is alpha-D-galactose 1-phosphate + UDP-alpha-D-glucose = alpha-D-glucose 1-phosphate + UDP-alpha-D-galactose. It functions in the pathway carbohydrate metabolism; galactose metabolism. This chain is Galactose-1-phosphate uridylyltransferase 2 (galT2), found in Streptococcus pneumoniae serotype 4 (strain ATCC BAA-334 / TIGR4).